The chain runs to 186 residues: uncharacterized protein (186 aa).

Residues 1-181 (MVSFSYKGNL…TFVSLASDFL (181 aa)) enclose the Macro domain.

Belongs to the MacroD-type family.

This is an uncharacterized protein from Thermoplasma volcanium (strain ATCC 51530 / DSM 4299 / JCM 9571 / NBRC 15438 / GSS1).